The primary structure comprises 678 residues: Protein KHNYN (678 aa).

S10 is modified (phosphoserine). Disordered stretches follow at residues 222–251 (QGVR…ARGD) and 347–407 (LHNG…ARGG). Pro residues predominate over residues 355-367 (PRVPSPPPAPEPP). At S359 the chain carries Phosphoserine. Basic and acidic residues predominate over residues 370 to 388 (CGDRGDCGDRGDVGDRGDK). The RNase NYN domain occupies 437-589 (LRHIVIDGSN…LGRNGPTLDE (153 aa)). The segment at 595-633 (ARTQGSSKAQHPSRGFAEHGKQQQGREEEKGSGGIRKTR) is disordered. Positions 610–633 (FAEHGKQQQGREEEKGSGGIRKTR) are enriched in basic and acidic residues.

The protein belongs to the N4BP1 family.

This is Protein KHNYN (KHNYN) from Homo sapiens (Human).